Reading from the N-terminus, the 247-residue chain is Terpene cyclase ausL (247 aa).

6 helical membrane passes run 49 to 69 (AIAV…AWIY), 75 to 95 (HWQG…AATL), 114 to 134 (LVLL…CLAL), 138 to 158 (GALG…SGAV), 171 to 191 (SLVI…KLCI), and 206 to 226 (PMCW…PVLY).

The protein belongs to the paxB family.

The protein localises to the membrane. The protein operates within secondary metabolite biosynthesis; terpenoid biosynthesis. In terms of biological role, terpene cyclase; part of the gene cluster that mediates the biosynthesis of calidodehydroaustin, a fungal meroterpenoid. The first step of the pathway is the synthesis of 3,5-dimethylorsellinic acid by the polyketide synthase ausA. 3,5-dimethylorsellinic acid is then prenylated by the polyprenyl transferase ausN. Further epoxidation by the FAD-dependent monooxygenase ausM and cyclization by the probable terpene cyclase ausL lead to the formation of protoaustinoid A. Protoaustinoid A is then oxidized to spiro-lactone preaustinoid A3 by the combined action of the FAD-binding monooxygenases ausB and ausC, and the dioxygenase ausE. Acid-catalyzed keto-rearrangement and ring contraction of the tetraketide portion of preaustinoid A3 by ausJ lead to the formation of preaustinoid A4. The aldo-keto reductase ausK, with the help of ausH, is involved in the next step by transforming preaustinoid A4 into isoaustinone which is in turn hydroxylated by the P450 monooxygenase ausI to form austinolide. The cytochrome P450 monooxygenase ausG modifies austinolide to austinol. Austinol is further acetylated to austin by the O-acetyltransferase ausP, which spontaneously changes to dehydroaustin. The cytochrome P450 monooxygenase ausR then converts dehydroaustin is into 7-dehydrodehydroaustin. The hydroxylation catalyzed by ausR permits the O-acetyltransferase ausQ to add an additional acetyl group to the molecule, leading to the formation of acetoxydehydroaustin. The short chain dehydrogenase ausT catalyzes the reduction of the double bond present between carbon atoms 1 and 2 to convert 7-dehydrodehydroaustin into 1,2-dihydro-7-hydroxydehydroaustin. AusQ catalyzes not only an acetylation reaction but also the addition of the PKS ausV diketide product to 1,2-dihydro-7-hydroxydehydroaustin, forming precalidodehydroaustin. Finally, the iron/alpha-ketoglutarate-dependent dioxygenase converts precalidodehydroaustin into calidodehydroaustin. The chain is Terpene cyclase ausL from Aspergillus calidoustus.